The chain runs to 288 residues: Coiled-coil domain-containing protein 190 (288 aa).

The stretch at Leu-16–Phe-69 forms a coiled coil. The segment at Gly-141 to Lys-235 is disordered. Positions His-177 to Asp-188 are enriched in basic and acidic residues. Polar residues predominate over residues Ala-203–Gln-213.

The sequence is that of Coiled-coil domain-containing protein 190 (Ccdc190) from Mus musculus (Mouse).